We begin with the raw amino-acid sequence, 670 residues long: Probable potassium transport system protein Kup (670 aa).

The interval 1-42 (MSQIPSPNDPPPAGAVPTSGAPAGPSATPAPSPTAGFSLPEH) is disordered. Positions 15–35 (AVPTSGAPAGPSATPAPSPTA) are enriched in low complexity. 12 helical membrane passes run 51 to 71 (LAALAVGALGVVYGDIGTSPL), 91 to 111 (VLGVLSLVFWAMTFVVTFKYM), 144 to 164 (VLLMLGLFGAALLYGDGIITP), 180 to 200 (PAMERVVVPATVVILVFLFLF), 208 to 228 (VGAVFGPIMLVWFATIAVLGV), 254 to 274 (GWHGFLVLGGVVLVITGGEAL), 290 to 310 (WLGLAMPALLLNYLGQGALLL), 322 to 342 (LLAPEWALYPTIAIATAAAIV), 380 to 400 (IYLPEVNWMLGTACVALVLGF), 406 to 426 (LASAYGIAVTGTMIVTTLLFH), 440 to 460 (AWPLTVLFLTVDASFFLANVV), and 464 to 484 (DGGWFPIAAAALVFTLMSTWK).

Belongs to the HAK/KUP transporter (TC 2.A.72) family.

It localises to the cell inner membrane. It carries out the reaction K(+)(in) + H(+)(in) = K(+)(out) + H(+)(out). Functionally, transport of potassium into the cell. Likely operates as a K(+):H(+) symporter. In Anaeromyxobacter dehalogenans (strain 2CP-C), this protein is Probable potassium transport system protein Kup.